A 474-amino-acid chain; its full sequence is Glycogen synthase (474 aa).

An ADP-alpha-D-glucose-binding site is contributed by lysine 15.

This sequence belongs to the glycosyltransferase 1 family. Bacterial/plant glycogen synthase subfamily.

It catalyses the reaction [(1-&gt;4)-alpha-D-glucosyl](n) + ADP-alpha-D-glucose = [(1-&gt;4)-alpha-D-glucosyl](n+1) + ADP + H(+). It functions in the pathway glycan biosynthesis; glycogen biosynthesis. Its function is as follows. Synthesizes alpha-1,4-glucan chains using ADP-glucose. The sequence is that of Glycogen synthase from Chlamydia trachomatis serovar L2b (strain UCH-1/proctitis).